A 739-amino-acid polypeptide reads, in one-letter code: Phosphoribosylformylglycinamidine synthase subunit PurL (739 aa).

His54 is a catalytic residue. 2 residues coordinate ATP: Tyr57 and Lys96. Glu98 contacts Mg(2+). Substrate contacts are provided by residues 99-102 (SHNH) and Arg121. The active-site Proton acceptor is the His100. Asp122 contributes to the Mg(2+) binding site. Gln245 is a binding site for substrate. Asp273 contributes to the Mg(2+) binding site. 317-319 (ESQ) contacts substrate. Asp500 and Gly537 together coordinate ATP. Residue Asn538 participates in Mg(2+) binding. Ser540 provides a ligand contact to substrate.

The protein belongs to the FGAMS family. Monomer. Part of the FGAM synthase complex composed of 1 PurL, 1 PurQ and 2 PurS subunits.

Its subcellular location is the cytoplasm. It carries out the reaction N(2)-formyl-N(1)-(5-phospho-beta-D-ribosyl)glycinamide + L-glutamine + ATP + H2O = 2-formamido-N(1)-(5-O-phospho-beta-D-ribosyl)acetamidine + L-glutamate + ADP + phosphate + H(+). Its pathway is purine metabolism; IMP biosynthesis via de novo pathway; 5-amino-1-(5-phospho-D-ribosyl)imidazole from N(2)-formyl-N(1)-(5-phospho-D-ribosyl)glycinamide: step 1/2. In terms of biological role, part of the phosphoribosylformylglycinamidine synthase complex involved in the purines biosynthetic pathway. Catalyzes the ATP-dependent conversion of formylglycinamide ribonucleotide (FGAR) and glutamine to yield formylglycinamidine ribonucleotide (FGAM) and glutamate. The FGAM synthase complex is composed of three subunits. PurQ produces an ammonia molecule by converting glutamine to glutamate. PurL transfers the ammonia molecule to FGAR to form FGAM in an ATP-dependent manner. PurS interacts with PurQ and PurL and is thought to assist in the transfer of the ammonia molecule from PurQ to PurL. In Bacillus cereus (strain G9842), this protein is Phosphoribosylformylglycinamidine synthase subunit PurL.